The primary structure comprises 490 residues: N-succinylglutamate 5-semialdehyde dehydrogenase (490 aa).

224 to 229 lines the NAD(+) pocket; sequence GSSPTG. Active-site residues include Glu247 and Cys281.

Belongs to the aldehyde dehydrogenase family. AstD subfamily.

It catalyses the reaction N-succinyl-L-glutamate 5-semialdehyde + NAD(+) + H2O = N-succinyl-L-glutamate + NADH + 2 H(+). It functions in the pathway amino-acid degradation; L-arginine degradation via AST pathway; L-glutamate and succinate from L-arginine: step 4/5. In terms of biological role, catalyzes the NAD-dependent reduction of succinylglutamate semialdehyde into succinylglutamate. The polypeptide is N-succinylglutamate 5-semialdehyde dehydrogenase (Hahella chejuensis (strain KCTC 2396)).